A 434-amino-acid polypeptide reads, in one-letter code: Enolase (434 aa).

Position 163 (glutamine 163) interacts with (2R)-2-phosphoglycerate. Catalysis depends on glutamate 205, which acts as the Proton donor. Residues aspartate 242, glutamate 291, and aspartate 318 each contribute to the Mg(2+) site. The (2R)-2-phosphoglycerate site is built by lysine 343, arginine 372, serine 373, and lysine 394. Lysine 343 functions as the Proton acceptor in the catalytic mechanism.

Belongs to the enolase family. The cofactor is Mg(2+).

It localises to the cytoplasm. The protein resides in the secreted. The protein localises to the cell surface. It carries out the reaction (2R)-2-phosphoglycerate = phosphoenolpyruvate + H2O. The protein operates within carbohydrate degradation; glycolysis; pyruvate from D-glyceraldehyde 3-phosphate: step 4/5. Its function is as follows. Catalyzes the reversible conversion of 2-phosphoglycerate (2-PG) into phosphoenolpyruvate (PEP). It is essential for the degradation of carbohydrates via glycolysis. This chain is Enolase, found in Streptococcus thermophilus (strain ATCC BAA-491 / LMD-9).